We begin with the raw amino-acid sequence, 334 residues long: D-fructose 1,6-bisphosphatase class 2/sedoheptulose 1,7-bisphosphatase (334 aa).

D33, E57, D85, and E88 together coordinate Mn(2+). Residues 88–90, Y119, 164–166, and 186–188 each bind substrate; these read EGT, RAR, and DGD. E213 provides a ligand contact to Mn(2+).

The protein belongs to the FBPase class 2 family. In terms of assembly, homotetramer. Mn(2+) serves as cofactor.

The enzyme catalyses beta-D-fructose 1,6-bisphosphate + H2O = beta-D-fructose 6-phosphate + phosphate. It catalyses the reaction D-sedoheptulose 1,7-bisphosphate + H2O = D-sedoheptulose 7-phosphate + phosphate. Its pathway is carbohydrate biosynthesis; Calvin cycle. Functionally, catalyzes the hydrolysis of fructose 1,6-bisphosphate (Fru 1,6-P2) and sedoheptulose 1,7-bisphosphate (Sed 1,7-P2) to fructose 6-phosphate and sedoheptulose 7-phosphate, respectively. In Parasynechococcus marenigrum (strain WH8102), this protein is D-fructose 1,6-bisphosphatase class 2/sedoheptulose 1,7-bisphosphatase.